The sequence spans 124 residues: Small ribosomal subunit protein uS12 (124 aa).

A disordered region spans residues 1-22; it reads MATINQLVRKPRKRKVAKSDVP. The residue at position 89 (Asp89) is a 3-methylthioaspartic acid. Residues 101-124 are disordered; sequence TLDTQGVQNRKQGRSKYGAKRPKS. Residues 111–124 are compositionally biased toward basic residues; it reads KQGRSKYGAKRPKS.

The protein belongs to the universal ribosomal protein uS12 family. In terms of assembly, part of the 30S ribosomal subunit. Contacts proteins S8 and S17. May interact with IF1 in the 30S initiation complex.

With S4 and S5 plays an important role in translational accuracy. Functionally, interacts with and stabilizes bases of the 16S rRNA that are involved in tRNA selection in the A site and with the mRNA backbone. Located at the interface of the 30S and 50S subunits, it traverses the body of the 30S subunit contacting proteins on the other side and probably holding the rRNA structure together. The combined cluster of proteins S8, S12 and S17 appears to hold together the shoulder and platform of the 30S subunit. This chain is Small ribosomal subunit protein uS12, found in Marinobacter nauticus (strain ATCC 700491 / DSM 11845 / VT8) (Marinobacter aquaeolei).